The primary structure comprises 369 residues: Putative FAD-dependent monooxygenase YetM (369 aa).

The first 32 residues, 1-32, serve as a signal peptide directing secretion; the sequence is MKHMLIAGGGIGGLSAAISLRKAGFSVTLCEA. FAD is bound by residues G12, 31–32, V126, and D285; that span reads EA.

It depends on FAD as a cofactor.

The protein is Putative FAD-dependent monooxygenase YetM (yetM) of Bacillus subtilis (strain 168).